The primary structure comprises 88 residues: Small ribosomal subunit protein uS15 (88 aa).

It belongs to the universal ribosomal protein uS15 family. In terms of assembly, part of the 30S ribosomal subunit. Forms a bridge to the 50S subunit in the 70S ribosome, contacting the 23S rRNA.

Functionally, one of the primary rRNA binding proteins, it binds directly to 16S rRNA where it helps nucleate assembly of the platform of the 30S subunit by binding and bridging several RNA helices of the 16S rRNA. Forms an intersubunit bridge (bridge B4) with the 23S rRNA of the 50S subunit in the ribosome. In Francisella tularensis subsp. holarctica (strain LVS), this protein is Small ribosomal subunit protein uS15.